The sequence spans 802 residues: Copper-exporting P-type ATPase (802 aa).

HMA domains are found at residues 5–70 and 72–138; these read KKTT…YGVA and ETVE…YDAS. Cu(+) is bound by residues Cys16, Cys19, Cys83, and Cys86. 6 helical membrane passes run 161–181, 192–212, 224–244, 256–276, 411–431, and 438–458; these read LIIS…HLFN, WFQF…FYVG, MDVL…YEMI, LYFE…YLEA, YFVP…ITLV, and PALV…LGLA. Residue Asp495 is the 4-aspartylphosphate intermediate of the active site. Mg(2+)-binding residues include Asp690 and Asp694. A run of 2 helical transmembrane segments spans residues 748 to 767 and 771 to 790; these read LFWA…LGLL and VAGA…ALRL.

The protein belongs to the cation transport ATPase (P-type) (TC 3.A.3) family. Type IB subfamily.

The protein localises to the cell membrane. The catalysed reaction is Cu(+)(in) + ATP + H2O = Cu(+)(out) + ADP + phosphate + H(+). Its function is as follows. Involved in copper export. The protein is Copper-exporting P-type ATPase (copA) of Staphylococcus aureus (strain bovine RF122 / ET3-1).